A 510-amino-acid chain; its full sequence is Beta-glucosidase 12 (510 aa).

A signal peptide spans 1–24 (MAAAGAMPGGLLLTFLLLAVVASG). Residue Q53 participates in a beta-D-glucoside binding. The N-linked (GlcNAc...) asparagine glycan is linked to N122. A beta-D-glucoside contacts are provided by residues H157 and 202–203 (NE). Residue E203 is the Proton donor of the active site. Disulfide bonds link C208–C243 and C222–C230. N229 is a glycosylation site (N-linked (GlcNAc...) asparagine). Position 346 (Y346) interacts with a beta-D-glucoside. 2 N-linked (GlcNAc...) asparagine glycosylation sites follow: N361 and N371. E417 contacts a beta-D-glucoside. The Nucleophile role is filled by E417. N425 carries an N-linked (GlcNAc...) asparagine glycan. A beta-D-glucoside is bound by residues W466, 473 to 474 (EW), and F482.

It belongs to the glycosyl hydrolase 1 family.

The protein localises to the secreted. The enzyme catalyses Hydrolysis of terminal, non-reducing beta-D-glucosyl residues with release of beta-D-glucose.. Hydrolyzes p-nitrophenyl beta-D-glucoside, p-nitrophenyl beta-D-galactoside, p-nitrophenyl beta-D-xyloside, p-nitrophenyl beta-D-fucoside, p-nitrophenyl beta-L-arabinoside, cello-oligosaccharides and laminaribiose. The chain is Beta-glucosidase 12 from Oryza sativa subsp. indica (Rice).